A 233-amino-acid chain; its full sequence is Movement and silencing protein TGBp1 (233 aa).

The (+)RNA virus helicase ATP-binding domain maps to 1 to 134 (MDCKYLLELL…ALLNGIFGCQ (134 aa)). Residues 135–233 (IKSRREDLCH…EFDAWSHATC (99 aa)) form the (+)RNA virus helicase C-terminal domain.

Belongs to the Tymovirales TGBp1 protein family. In terms of assembly, homodimer and homooligomer. Interacts with capsid protein. Interacts with host AGO1; this interaction targets the host protein for degradation, thereby suppressing the antiviral RNA silencing.

It is found in the host cytoplasm. Functionally, transports viral genome to neighboring plant cells directly through plasmosdesmata, without any budding. The movement protein allows efficient cell to cell propagation, by bypassing the host cell wall barrier. Increases plasmodesma size exclusion limit. Acts as a suppressor of RNA-mediated gene silencing, also known as post-transcriptional gene silencing (PTGS), a mechanism of plant viral defense that limits the accumulation of viral RNAs. The chain is Movement and silencing protein TGBp1 from Narcissus mosaic virus (NMV).